The following is a 509-amino-acid chain: Histidine--tRNA ligase, cytoplasmic (509 aa).

N-acetylalanine is present on Ala-2. Residues 3 to 59 (DRAALEELVRLQGAHVRGLKEQKASAEQIEEEVTKLLKLKAQLGQDEGKQKFVLKTP) form the WHEP-TRS domain. A Phosphoserine modification is found at Ser-66. L-histidine contacts are provided by residues 130–132 (DLT), Arg-157, Gln-173, Asp-177, Arg-326, and 330–331 (YY). Ser-356 carries the post-translational modification Phosphoserine.

It belongs to the class-II aminoacyl-tRNA synthetase family. As to quaternary structure, homodimer.

It localises to the cytoplasm. The catalysed reaction is tRNA(His) + L-histidine + ATP = L-histidyl-tRNA(His) + AMP + diphosphate + H(+). Its function is as follows. Catalyzes the ATP-dependent ligation of histidine to the 3'-end of its cognate tRNA, via the formation of an aminoacyl-adenylate intermediate (His-AMP). Plays a role in axon guidance. This Mus musculus (Mouse) protein is Histidine--tRNA ligase, cytoplasmic (Hars1).